A 389-amino-acid chain; its full sequence is Naringenin-chalcone synthase (389 aa).

Cys-164 is an active-site residue.

It belongs to the thiolase-like superfamily. Chalcone/stilbene synthases family. Expressed in glandular trichomes. Detected at low levels in female flowers, stems, seeds, leaves and roots.

Its subcellular location is the cytoplasm. The enzyme catalyses (E)-4-coumaroyl-CoA + 3 malonyl-CoA + 3 H(+) = 2',4,4',6'-tetrahydroxychalcone + 3 CO2 + 4 CoA. Its function is as follows. Chalcone synthase that can also use isovaleryl-CoA, isobutyryl-CoA or hexanoyl-CoA as substrates, but that is unable to produce olivetol or olivetolic acid. This chain is Naringenin-chalcone synthase (CHS), found in Cannabis sativa (Hemp).